The following is a 630-amino-acid chain: DNA topoisomerase 4 subunit B (630 aa).

ATP-binding positions include Y5, N42, D69, 110–116 (GLHGVGI), and K334. Residues 412–525 (TELFLVEGDS…HGHVYVALPP (114 aa)) enclose the Toprim domain. Residues E418, D490, and D492 each contribute to the Mg(2+) site.

Belongs to the type II topoisomerase family. ParE type 1 subfamily. As to quaternary structure, heterotetramer composed of ParC and ParE. Mg(2+) is required as a cofactor. Mn(2+) serves as cofactor. The cofactor is Ca(2+).

It catalyses the reaction ATP-dependent breakage, passage and rejoining of double-stranded DNA.. Its activity is regulated as follows. Pyrrolopyrimidines inhibit both GyrB and its paralog in topoisomerase IV (parE). Functionally, topoisomerase IV is essential for chromosome segregation; it is the principal protein responsible for decatenating newly replicated chromosomes. It relaxes supercoiled DNA. MukB stimulates the relaxation activity of topoisomerase IV and also has a modest effect on decatenation. This is DNA topoisomerase 4 subunit B from Escherichia coli (strain K12).